The chain runs to 43 residues: Protein PsbN (43 aa).

A helical transmembrane segment spans residues 5-27 (TLFAISISCLLVSFTGYALYTAF).

It belongs to the PsbN family.

It is found in the plastid. The protein resides in the chloroplast thylakoid membrane. Its function is as follows. May play a role in photosystem I and II biogenesis. The chain is Protein PsbN from Thuja plicata (Western red-cedar).